The sequence spans 912 residues: Transferrin-binding protein A (912 aa).

The N-terminal stretch at 1-23 (MTKKPYFRLSIISCLLISCYVKA) is a signal peptide. Residues 50-57 (ETISVTAE) carry the TonB box motif. One can recognise a TBDR plug domain in the interval 63–188 (KDNEVTGLGK…LAGSVTFQSK (126 aa)). A TBDR beta-barrel domain is found at 199 to 912 (SWGIQTKNAY…NYTLTLEMKF (714 aa)). The short motif at 895 to 912 (TRYAASGRNYTLTLEMKF) is the TonB C-terminal box element.

Belongs to the TonB-dependent receptor family.

Its subcellular location is the cell outer membrane. Its function is as follows. Haemophilus acquires iron by extracting it from serum transferrin (TF) in its human host. Acts as a transferrin receptor and is required for transferrin utilization. The protein is Transferrin-binding protein A of Haemophilus influenzae (strain ATCC 51907 / DSM 11121 / KW20 / Rd).